Reading from the N-terminus, the 107-residue chain is uncharacterized protein (107 aa).

Residues 87 to 107 are disordered; the sequence is KNRNGPKAEKRRPYVRAHAKW.

This is an uncharacterized protein from Saccharomyces cerevisiae (strain ATCC 204508 / S288c) (Baker's yeast).